Consider the following 360-residue polypeptide: Inward rectifier potassium channel 13 (360 aa).

Residues 1-50 lie on the Cytoplasmic side of the membrane; the sequence is MDSSNCKVIAPLLSQRYRRMVTKDGHSTLQMDGAQRGLAYLRDAWGILMD. The chain crosses the membrane as a helical span at residues 51 to 77; it reads MRWRWMMLVFSASFVVHWLVFAVLWYV. Over 78–105 the chain is Extracellular; the sequence is LAEMNGDLELDHDAPPENHTICVKYITS. An intramembrane region (helical; Pore-forming) is located at residues 106-122; it reads FTAAFSFSLETQLTIGY. Positions 119–124 match the Selectivity filter motif; sequence TIGYGT. The Extracellular portion of the chain corresponds to 123-131; it reads GTMFPSGDC. The helical transmembrane segment at 132–157 threads the bilayer; the sequence is PSAIALLAIQMLLGLMLEAFITGAFV. Residues 158–360 are Cytoplasmic-facing; sequence AKIARPKNRA…FQISETGLTE (203 aa). Serine 201 carries the post-translational modification Phosphoserine; by PKC. Residue serine 287 is modified to Phosphoserine; by PKA.

The protein belongs to the inward rectifier-type potassium channel (TC 1.A.2.1) family. KCNJ13 subfamily. As to quaternary structure, homotetramer. Interacts with RAB28; the interaction may facilitate cone outer segments phagocytosis. Phosphorylation at Ser-201 by PKC strongly inhibits ionic currents, while phosphorylation at Ser-287 by PKA increases them. As to expression, predominantly expressed in small intestine. Expression is also detected in stomach, kidney, and all central nervous system regions tested with the exception of spinal cord.

Its subcellular location is the membrane. The protein localises to the cell membrane. The catalysed reaction is K(+)(in) = K(+)(out). Inhibited by Ba(2+) and Cs(+), although sensitivity to those inhibitors is much lower than in other Kir channels. Functionally, inward rectifier potassium channels are characterized by a greater tendency to allow potassium to flow into the cell rather than out of it. Their voltage dependence is regulated by the concentration of extracellular potassium; as external potassium is raised, the voltage range of the channel opening shifts to more positive voltages. The inward rectification is mainly due to the blockage of outward current by internal magnesium. KCNJ13 has a very low single channel conductance, low sensitivity to block by external barium and cesium, and no dependence of its inward rectification properties on the internal blocking particle magnesium. The protein is Inward rectifier potassium channel 13 (KCNJ13) of Homo sapiens (Human).